The following is a 439-amino-acid chain: Xylose isomerase (439 aa).

Catalysis depends on residues His101 and Asp104. Mg(2+) is bound by residues Glu232, Glu268, His271, Asp296, Asp307, Asp309, and Asp339.

The protein belongs to the xylose isomerase family. As to quaternary structure, homotetramer. Mg(2+) is required as a cofactor.

Its subcellular location is the cytoplasm. The enzyme catalyses alpha-D-xylose = alpha-D-xylulofuranose. This is Xylose isomerase from Haemophilus influenzae (strain PittEE).